Here is a 416-residue protein sequence, read N- to C-terminus: Phosphatidylinositol 5-phosphate 4-kinase type-2 beta (416 aa).

At Ser2 the chain carries N-acetylserine. Position 8 is a phosphothreonine (Thr8). Phosphoserine is present on Ser19. The PIPK domain maps to 38 to 415; that stretch reads ASEPILSVLM…RFNEFMSNIL (378 aa). Residues 64-70 form a required for interaction with PIP5K1A region; it reads VMLMPDD. Lys94 and Lys150 each carry N6-acetyllysine. Residues 202 to 204 and Lys214 each bind ATP; that span reads RNV. GTP contacts are provided by residues 203–204 and Lys214; that span reads NV. Thr322 is modified (phosphothreonine). Phosphoserine is present on Ser326. GTP is bound at residue Asp369.

In terms of assembly, homodimer. Binds TNFRSF1A. Interacts with PIP4K2A; the interaction suppresses ubiquitination by the SPOP/CUL3 complex. Probably interacts with PIP5K1A; the interaction inhibits PIP5K1A kinase activity. Post-translationally, ubiquitinated by the SPOP/CUL3 complex. Ubiquitination is stimulated by PtdIns5P levels. Phosphorylated on serine residues.

It is found in the endoplasmic reticulum membrane. Its subcellular location is the cell membrane. The protein resides in the nucleus. The protein localises to the cytoplasm. The enzyme catalyses a 1,2-diacyl-sn-glycero-3-phospho-(1D-myo-inositol-5-phosphate) + ATP = a 1,2-diacyl-sn-glycero-3-phospho-(1D-myo-inositol-4,5-bisphosphate) + ADP + H(+). It carries out the reaction 1,2-dihexadecanoyl-sn-glycero-3-phospho-(1D-myo-inositol-5-phosphate) + ATP = 1,2-dihexadecanoyl-sn-glycero-3-phospho-(1D-myo-inositol-4,5-bisphosphate) + ADP + H(+). It catalyses the reaction 1,2-dihexadecanoyl-sn-glycero-3-phospho-(1D-myo-inositol-5-phosphate) + GTP = 1,2-dihexadecanoyl-sn-glycero-3-phospho-(1D-myo-inositol-4,5-bisphosphate) + GDP + H(+). Its function is as follows. Participates in the biosynthesis of phosphatidylinositol 4,5-bisphosphate. Preferentially utilizes GTP, rather than ATP, for PI(5)P phosphorylation and its activity reflects changes in direct proportion to the physiological GTP concentration. Its GTP-sensing activity is critical for metabolic adaptation. In collaboration with PIP4K2A, has a role in mediating autophagy in times of nutrient stress. Required for autophagosome-lysosome fusion and the regulation of cellular lipid metabolism. PIP4Ks negatively regulate insulin signaling through a catalytic-independent mechanism. They interact with PIP5Ks and suppress PIP5K-mediated PtdIns(4,5)P2 synthesis and insulin-dependent conversion to PtdIns(3,4,5)P3. The sequence is that of Phosphatidylinositol 5-phosphate 4-kinase type-2 beta from Mus musculus (Mouse).